The primary structure comprises 503 residues: Maturase K (503 aa).

This sequence belongs to the intron maturase 2 family. MatK subfamily.

The protein resides in the plastid. It is found in the chloroplast. In terms of biological role, usually encoded in the trnK tRNA gene intron. Probably assists in splicing its own and other chloroplast group II introns. The polypeptide is Maturase K (Eucalyptus globulus (Tasmanian blue gum)).